The following is a 618-amino-acid chain: DNA mismatch repair protein MutL (618 aa).

It belongs to the DNA mismatch repair MutL/HexB family.

Its function is as follows. This protein is involved in the repair of mismatches in DNA. It is required for dam-dependent methyl-directed DNA mismatch repair. May act as a 'molecular matchmaker', a protein that promotes the formation of a stable complex between two or more DNA-binding proteins in an ATP-dependent manner without itself being part of a final effector complex. The chain is DNA mismatch repair protein MutL from Bradyrhizobium sp. (strain BTAi1 / ATCC BAA-1182).